The following is a 332-amino-acid chain: Biotin synthase (332 aa).

In terms of domain architecture, Radical SAM core spans 51 to 279 (YKVQLASLLS…LSRVRLSAGR (229 aa)). Residues cysteine 66, cysteine 70, and cysteine 73 each coordinate [4Fe-4S] cluster. [2Fe-2S] cluster-binding residues include cysteine 110, cysteine 142, cysteine 202, and arginine 274.

It belongs to the radical SAM superfamily. Biotin synthase family. As to quaternary structure, homodimer. [4Fe-4S] cluster serves as cofactor. Requires [2Fe-2S] cluster as cofactor.

It carries out the reaction (4R,5S)-dethiobiotin + (sulfur carrier)-SH + 2 reduced [2Fe-2S]-[ferredoxin] + 2 S-adenosyl-L-methionine = (sulfur carrier)-H + biotin + 2 5'-deoxyadenosine + 2 L-methionine + 2 oxidized [2Fe-2S]-[ferredoxin]. It functions in the pathway cofactor biosynthesis; biotin biosynthesis; biotin from 7,8-diaminononanoate: step 2/2. In terms of biological role, catalyzes the conversion of dethiobiotin (DTB) to biotin by the insertion of a sulfur atom into dethiobiotin via a radical-based mechanism. The polypeptide is Biotin synthase (Prochlorococcus marinus (strain MIT 9211)).